A 1738-amino-acid chain; its full sequence is Sodium leak channel NALCN (1738 aa).

Residues 1–36 (MLKRKQSSRVEAQPVTDFGPDESLSDNADILWINKP) are Cytoplasmic-facing. Residues 37–57 (WVHSLLRICAIISVIPVCMNT) traverse the membrane as a helical segment. Topologically, residues 58–65 (PMTFEHYP) are extracellular. The chain crosses the membrane as a helical span at residues 66–90 (PLQYVTFTLDTLLMFLYTAEMIAKM). Residues 91-106 (HIRGIVKGDSSYVKDR) are Cytoplasmic-facing. A helical transmembrane segment spans residues 107 to 129 (WCVFDGFMVFCLWVSLVLQVFEI). At 130-137 (ADIVDQMS) the chain is on the extracellular side. A helical; Voltage-sensor membrane pass occupies residues 138-158 (PWGMLRIPRPLIMIRAFRIYF). The Cytoplasmic portion of the chain corresponds to 159–173 (RFELPRTRITNILKR). The chain crosses the membrane as a helical span at residues 174-199 (SGEQIWSVSIFLLFFLLLYGILGVQM). Over 200-269 (FGTFTYHCVV…YSGFNEIGTS (70 aa)) the chain is Extracellular. 2 cysteine pairs are disulfide-bonded: Cys-207–Cys-239 and Cys-229–Cys-245. 2 N-linked (GlcNAc...) asparagine glycosylation sites follow: Asn-210 and Asn-216. Positions 270–289 (IFTVYEASSQEGWVFLMYRA) form an intramembrane region, pore-forming. At 290–294 (IDSFP) the chain is on the extracellular side. The chain crosses the membrane as a helical span at residues 295–322 (RWRSYFYFITLIFFLAWLVKNVFIAVII). Topologically, residues 323 to 382 (ETFAEIRVQFQQMWGTRSSTTSTATTQMFHEDAAGGWQLVAVDVNKPQGRAPACLQKMMR) are cytoplasmic. A helical transmembrane segment spans residues 383-403 (SSVFHMFILSMVTVDVIVAAS). The Extracellular portion of the chain corresponds to 404–416 (NYYKGENFRRQYD). The helical transmembrane segment at 417–439 (EFYLAEVAFTVLFDLEALLKIWC) threads the bilayer. The Cytoplasmic portion of the chain corresponds to 440–447 (LGFTGYIS). A helical transmembrane segment spans residues 448 to 468 (SSLHKFELLLVIGTTLHVYPD). Residues 469-472 (LYHS) are Extracellular-facing. A helical; Voltage-sensor membrane pass occupies residues 473-492 (QFTYFQVLRVVRLIKISPAL). Over 493–502 (EDFVYKIFGP) the chain is Cytoplasmic. A helical membrane pass occupies residues 503–530 (GKKLGSLVVFTASLLIVMSAISLQMFCF). Topologically, residues 531 to 543 (VEELDRFTTFPRA) are extracellular. An intramembrane region (pore-forming) is located at residues 544–563 (FMSMFQILTQEGWVDVMDQT). Topologically, residues 564 to 569 (LNAVGH) are extracellular. Residues 570-599 (MWAPLVAIYFILYHLFATLILLSLFVAVIL) traverse the membrane as a helical segment. At 600–886 (DNLELDEDLK…QLYDLLGLVT (287 aa)) the chain is on the cytoplasmic side. The tract at residues 762-789 (QERRSLRHGSNSQRISRGKSLETLTQDH) is disordered. The stretch at 795-830 (YRNAQREDSEIKMIQEKKEQAEMKRKVQEEELRENH) forms a coiled coil. Residues 887–906 (YLDWVMITVTICSCISMMFE) traverse the membrane as a helical segment. The Extracellular segment spans residues 907-915 (SPFRRVMHA). The helical transmembrane segment at 916–939 (PTLQIAEYVFVIFMSIELNLKIMA) threads the bilayer. Topologically, residues 940–947 (DGLFFTPT) are cytoplasmic. A helical transmembrane segment spans residues 948 to 972 (AVIRDFGGVMDIFIYLVSLIFLCWM). At 973-980 (PQNVPAES) the chain is on the extracellular side. The helical; Voltage-sensor transmembrane segment at 981–1003 (GAQLLMVLRCLRPLRIFKLVPQM) threads the bilayer. The Cytoplasmic segment spans residues 1004 to 1015 (RKVVRELFSGFK). Residues 1016–1039 (EIFLVSILLLTLMLVFASFGVQLF) form a helical membrane-spanning segment. Residues 1040–1104 (AGKLAKCNDP…NFNFDNVGNA (65 aa)) are Extracellular-facing. Residues Cys-1046 and Cys-1057 are joined by a disulfide bond. Residue Asn-1064 is glycosylated (N-linked (GlcNAc...) asparagine). Residues 1105–1124 (MLALFEVLSLKGWVEVRDVI) constitute an intramembrane region (pore-forming). Topologically, residues 1125 to 1129 (IHRVG) are extracellular. The chain crosses the membrane as a helical span at residues 1130 to 1159 (PIHGIYIHVFVFLGCMIGLTLFVGVVIANF). The Cytoplasmic segment spans residues 1160–1210 (NENKGTALLTVDQRRWEDLKSRLKIAQPLHLPPRPDNDGFRAKMYDITQHP). Residues 1211 to 1227 (FFKRTIALLVLAQSVLL) form a helical membrane-spanning segment. At 1228 to 1236 (SVKWDVEDP) the chain is on the extracellular side. The chain crosses the membrane as a helical span at residues 1237–1260 (VTVPLATMSVVFTFIFVLEVTMKI). At 1261 to 1271 (IAMSPAGFWQS) the chain is on the cytoplasmic side. The chain crosses the membrane as a helical span at residues 1272–1293 (RRNRYDLLVTSLGVVWVVLHFA). Residues 1294 to 1296 (LLN) are Extracellular-facing. Residues 1297–1318 (AYTYMMGACVIVFRFFSICGKH) form a helical; Voltage-sensor membrane-spanning segment. Topologically, residues 1319–1331 (VTLKMLLLTVVVS) are cytoplasmic. The chain crosses the membrane as a helical span at residues 1332–1357 (MYKSFFIIVGMFLLLLCYAFAGVVLF). At 1358 to 1378 (GTVKYGENINRHANFSSAGKA) the chain is on the extracellular side. The pore-forming intramembrane region spans 1379 to 1398 (ITVLFRIVTGEDWNKIMHDC). Residues 1399–1420 (MVQPPFCTPDEFTYWATDCGNY) lie on the Extracellular side of the membrane. Cys-1405 and Cys-1417 are joined by a disulfide. A helical transmembrane segment spans residues 1421–1447 (AGALMYFCSFYVIIAYIMLNLLVAIIV). Residues 1448-1738 (ENFSLFYSTE…DESGDDLLDI (291 aa)) are Cytoplasmic-facing. A disordered region spans residues 1611 to 1679 (PPSIETTQPS…WRLPSAPKPI (69 aa)). The segment covering 1613–1631 (SIETTQPSEDTNANSQDHN) has biased composition (polar residues). Residues 1633–1648 (QPESSSQQQLLSPTLS) are compositionally biased toward low complexity.

This sequence belongs to the NALCN family. Found in a complex with NALCN, UNC79, UNC80 and NACL1; these auxiliary subunits are indispensable for the function of NALCN channel. Interacts with UNC80; required for the NALCN activation/inhibition by GPCRs in neurons. Found in a complex with NALCN, UNC79 and UNC80; UNC80 bridges NALCN to UNC79. Interacts with CHRM3. Phosphorylated on tyrosine residues. As to expression, predominantly expressed in the brain, moderately in the heart and weakly in the pancreas.

The protein resides in the cell membrane. It carries out the reaction Na(+)(in) = Na(+)(out). With respect to regulation, inhibited by low micromolar concentrations of Gd(3+) and high micromolar concentrations of verapamil. Insensitive to tetrodotoxin (TTX) and potentiated by low external Ca(2+) concentration. Functionally, voltage-gated ion channel responsible for the resting Na(+) permeability that controls neuronal excitability. NALCN channel functions as a multi-protein complex, which consists at least of NALCN, NALF1, UNC79 and UNC80. NALCN is the voltage-sensing, pore-forming subunit of the NALCN channel complex. NALCN channel complex is constitutively active and conducts monovalent cations but is blocked by physiological concentrations of extracellular divalent cations. In addition to its role in regulating neuronal excitability, is required for normal respiratory rhythm, systemic osmoregulation by controlling the serum sodium concentration and in the regulation of the intestinal pace-making activity in the interstitial cells of Cajal. NALCN channel is also activated by neuropeptides such as neurotensin and substance P (SP) through a SRC family kinases-dependent pathway. In addition, NALCN activity is enhanced/modulated by several GPCRs, such as CHRM3. This chain is Sodium leak channel NALCN (Nalcn), found in Rattus norvegicus (Rat).